Reading from the N-terminus, the 229-residue chain is Adenosylcobinamide-GDP ribazoletransferase (229 aa).

6 helical membrane passes run 31 to 51 (AMLLAPLAALPLGLLVAAVLA), 55 to 75 (AVELPPLAVGLLAVGALAASS), 111 to 131 (AGVLATVVVAGVQAAALATLL), 134 to 154 (PLLAGALVCLSRCALWIVCCT), 176 to 196 (VAVLGGLLLSAVGGLVVLVLV), and 208 to 228 (GDVMGAAVELALAATLLAWAA).

The protein belongs to the CobS family. Requires Mg(2+) as cofactor.

The protein localises to the cell membrane. The enzyme catalyses alpha-ribazole + adenosylcob(III)inamide-GDP = adenosylcob(III)alamin + GMP + H(+). It carries out the reaction alpha-ribazole 5'-phosphate + adenosylcob(III)inamide-GDP = adenosylcob(III)alamin 5'-phosphate + GMP + H(+). The protein operates within cofactor biosynthesis; adenosylcobalamin biosynthesis; adenosylcobalamin from cob(II)yrinate a,c-diamide: step 7/7. Joins adenosylcobinamide-GDP and alpha-ribazole to generate adenosylcobalamin (Ado-cobalamin). Also synthesizes adenosylcobalamin 5'-phosphate from adenosylcobinamide-GDP and alpha-ribazole 5'-phosphate. This is Adenosylcobinamide-GDP ribazoletransferase from Nocardioides sp. (strain ATCC BAA-499 / JS614).